Consider the following 296-residue polypeptide: Decaprenyl diphosphate synthase (296 aa).

The disordered stretch occupies residues M1–P24. The active site involves D76. Position 76 (D76) interacts with Mg(2+). Residues D76–R80, W81, R89, H93, S121–N124, W125, R127, R168, R244, and R250–S252 contribute to the substrate site. Residue N124 is the Proton acceptor of the active site. E263 is a binding site for Mg(2+). R292–G294 provides a ligand contact to substrate.

It belongs to the UPP synthase family. As to quaternary structure, homodimer. Mg(2+) is required as a cofactor. It depends on Mn(2+) as a cofactor.

It localises to the cell membrane. The enzyme catalyses (2Z,6E)-farnesyl diphosphate + 7 isopentenyl diphosphate = (2Z,6Z,10Z,14Z,18Z,22Z,26Z,30Z,34E)-decaprenyl diphosphate + 7 diphosphate. The catalysed reaction is n isopentenyl diphosphate + (2E,6E)-farnesyl diphosphate = a di-trans,poly-cis-polyprenyl diphosphate + n diphosphate. With respect to regulation, activated by dithiothreitol and inhibited by EDTA. Catalyzes the sequential condensation of isopentenyl diphosphate (IPP) in the cis configuration with (2Z,6E)-farnesyl diphosphate (Z-FPP or EZ-FPP) generating the 50 carbon product trans,polycis-decaprenyl diphosphate. When (2E,6E)-farnesyl diphosphate (E-FPP or EE-FPP) is used in vitro, both primary products decaprenyl diphosphate and (2E,6E,10E)-geranylgeranyl diphosphate (EEE-GGPP) are synthesized. M.tuberculosis does not synthesize (2E,6E,10Z)-geranylgeranyl diphosphate (EEZ-GGPP) and heptaprenyl diphosphate. Can also accept many different allylic substrates, including E-geranyl diphosphate (E-GPP), neryl diphosphate (NPP), and all-trans-geranyl-geranyl diphosphate. This chain is Decaprenyl diphosphate synthase (uppS), found in Mycobacterium tuberculosis (strain ATCC 25618 / H37Rv).